The following is a 665-amino-acid chain: UvrABC system protein B (665 aa).

Positions Ala-25 to Arg-412 constitute a Helicase ATP-binding domain. Residue Gly-38–Thr-45 participates in ATP binding. The short motif at Tyr-91–Ile-114 is the Beta-hairpin element. The Helicase C-terminal domain occupies Gln-429–Thr-583. In terms of domain architecture, UVR spans Pro-626 to Lys-661.

The protein belongs to the UvrB family. In terms of assembly, forms a heterotetramer with UvrA during the search for lesions. Interacts with UvrC in an incision complex.

The protein resides in the cytoplasm. Its function is as follows. The UvrABC repair system catalyzes the recognition and processing of DNA lesions. A damage recognition complex composed of 2 UvrA and 2 UvrB subunits scans DNA for abnormalities. Upon binding of the UvrA(2)B(2) complex to a putative damaged site, the DNA wraps around one UvrB monomer. DNA wrap is dependent on ATP binding by UvrB and probably causes local melting of the DNA helix, facilitating insertion of UvrB beta-hairpin between the DNA strands. Then UvrB probes one DNA strand for the presence of a lesion. If a lesion is found the UvrA subunits dissociate and the UvrB-DNA preincision complex is formed. This complex is subsequently bound by UvrC and the second UvrB is released. If no lesion is found, the DNA wraps around the other UvrB subunit that will check the other stand for damage. The chain is UvrABC system protein B from Nostoc sp. (strain PCC 7120 / SAG 25.82 / UTEX 2576).